The chain runs to 215 residues: RNA pyrophosphohydrolase (215 aa).

Residues 6 to 149 (GFRPNVGIIL…KRDVYQLALT (144 aa)) enclose the Nudix hydrolase domain. Positions 38 to 59 (GGIKYGETPMQAMYRELHEETG) match the Nudix box motif.

The protein belongs to the Nudix hydrolase family. RppH subfamily. The cofactor is a divalent metal cation.

Accelerates the degradation of transcripts by removing pyrophosphate from the 5'-end of triphosphorylated RNA, leading to a more labile monophosphorylated state that can stimulate subsequent ribonuclease cleavage. This chain is RNA pyrophosphohydrolase, found in Burkholderia lata (strain ATCC 17760 / DSM 23089 / LMG 22485 / NCIMB 9086 / R18194 / 383).